Consider the following 294-residue polypeptide: UPF0761 membrane protein YPTS_0028 (294 aa).

7 consecutive transmembrane segments (helical) span residues 44 to 64 (LLSLVPLITVIFALFAAFPMF), 67 to 87 (ISIKLKAFIFANFIPATGDII), 108 to 128 (GLIVTALLLIYSVDSVLNIIW), 136 to 156 (LVFSFAVYWMVLTLGPILVGA), 185 to 205 (VFPLLISWVSFWLLYSVVPTV), 212 to 232 (ALIGALVAALLFELGKKGFAM), and 246 to 266 (VLAVIPILFLWVYWSWCIVLL).

It belongs to the UPF0761 family.

The protein localises to the cell inner membrane. This Yersinia pseudotuberculosis serotype IB (strain PB1/+) protein is UPF0761 membrane protein YPTS_0028.